A 461-amino-acid chain; its full sequence is Protein IQ-DOMAIN 2 (461 aa).

The disordered stretch occupies residues 1–55 (MGKKAKWFSSVKKAFSPDSKKSKQKLAEGQNGVISNPPVVDNVRQSSSSPPPALA). Residues 114 to 142 (EEAAAILIQTIFRGYLARRALRAMRGLVR) form the IQ domain. The segment at 141–158 (VRLKLLMEGSVVKRQAAN) is calmodulin-binding. The interval 278 to 461 (PLESSEKEQS…GVTVTNGAGS (184 aa)) is disordered. Over residues 310 to 345 (LTRNGSTQPNTPSSARGTPRNKNSFFSPPTPSRLNQ) the composition is skewed to polar residues. The Nuclear localization signal motif lies at 425 to 432 (KKRLSYPT).

It belongs to the IQD family. As to quaternary structure, binds to multiple calmodulin (CaM) in the presence of Ca(2+) and CaM-like proteins.

The protein localises to the nucleus. Its subcellular location is the cytoplasm. It localises to the cytoskeleton. May be involved in cooperative interactions with calmodulins or calmodulin-like proteins. Recruits calmodulin proteins to microtubules, thus being a potential scaffold in cellular signaling and trafficking. May associate with nucleic acids and regulate gene expression at the transcriptional or post-transcriptional level. This Arabidopsis thaliana (Mouse-ear cress) protein is Protein IQ-DOMAIN 2.